The primary structure comprises 1230 residues: Cullin-associated NEDD8-dissociated protein 1 (1230 aa).

N-acetylalanine is present on Ala-2. 12 HEAT repeats span residues 2 to 39 (ASAS…KDSI), 44 to 81 (DSER…KVKE), 83 to 119 (QVET…ELPP), 131 to 165 (CKKI…LSRQ), 171 to 208 (NFHP…SCGN), 210 to 247 (VFVD…QAGH), 248 to 282 (RIGE…FESF), 289 to 366 (EVYP…TRHE), 370 to 407 (EFYK…QTRP), 424 to 467 (PLTM…VLPG), 471 to 510 (QHIP…NHSP), and 515 to 552 (PHVQ…VIRP). Residue Lys-55 is modified to N6-acetyllysine. The disordered stretch occupies residues 315-344 (DEDEDENAMDADGGDDDDQGSDDEYSDDDD). Ser-335 carries the post-translational modification Phosphoserine. At Ser-558 the chain carries Phosphoserine. HEAT repeat units lie at residues 563–602 (PYIK…NLGD), 606–643 (PDLS…LKID), 646–683 (PVLG…NYSD), 688–725 (AMID…VYPS), 729–768 (KISG…TGTN), 770–808 (LGYM…ALTR), 809–845 (ACPK…LGEV), 852–889 (SGQL…GNLP), 890–927 (EYLP…GLKP), 928–960 (YVEN…KLTL), 961–998 (IDPE…DHPQ), 1002–1039 (PLLK…NKPS), 1043–1097 (DLLD…DSCL), 1099–1133 (RLDI…LSTL), and 1140–1189 (QRLD…IPEA). Lys-971 carries the post-translational modification N6-acetyllysine.

This sequence belongs to the CAND family. Interacts with TBP. Part of a complex that contains CUL1 and RBX1. Interacts with unneddylated cullins: interacts with CUL1, CUL2, CUL3, CUL4A, CUL4B and CUL5. Does not bind neddylated CUL1. Interaction with cullins is abolished in presence of COMMD1, which antagonizes with CAND1 for interacting with cullins. Interacts with ERCC6. Interacts with DCUN1D1, DCUN1D2, DCUN1D3, DCUN1D4 and DCUN1D5; these interactions are bridged by cullins and strongly inhibits the neddylation of cullins. As to expression, detected in heart, brain, spleen, liver, skeletal muscle, kidney and testis.

It is found in the cytoplasm. The protein resides in the nucleus. Its function is as follows. Key assembly factor of SCF (SKP1-CUL1-F-box protein) E3 ubiquitin ligase complexes that promotes the exchange of the substrate-recognition F-box subunit in SCF complexes, thereby playing a key role in the cellular repertoire of SCF complexes. Acts as a F-box protein exchange factor. The exchange activity of CAND1 is coupled with cycles of neddylation conjugation: in the deneddylated state, cullin-binding CAND1 binds CUL1-RBX1, increasing dissociation of the SCF complex and promoting exchange of the F-box protein. Probably plays a similar role in other cullin-RING E3 ubiquitin ligase complexes. May indirectly enhance transcription from various types of promoters. In Rattus norvegicus (Rat), this protein is Cullin-associated NEDD8-dissociated protein 1 (Cand1).